The chain runs to 23 residues: Dahlein-4.1 (23 aa).

In terms of tissue distribution, expressed by the skin dorsal glands.

Its subcellular location is the secreted. Has no antimicrobial activity. This chain is Dahlein-4.1, found in Ranoidea dahlii (Dahl's aquatic frog).